The following is a 2197-amino-acid chain: Protein Ycf2 (2197 aa).

1539-1546 is a binding site for ATP; the sequence is GSIGTGRS.

This sequence belongs to the Ycf2 family.

The protein localises to the plastid. Its subcellular location is the chloroplast stroma. In terms of biological role, probable ATPase of unknown function. Its presence in a non-photosynthetic plant (Epifagus virginiana) and experiments in tobacco indicate that it has an essential function which is probably not related to photosynthesis. This chain is Protein Ycf2, found in Ipomoea purpurea (Common morning glory).